The chain runs to 244 residues: Lactate utilization protein A (244 aa).

Belongs to the LutA/YkgE family.

In terms of biological role, is involved in L-lactate degradation and allows cells to grow with lactate as the sole carbon source. The sequence is that of Lactate utilization protein A from Oceanobacillus iheyensis (strain DSM 14371 / CIP 107618 / JCM 11309 / KCTC 3954 / HTE831).